The sequence spans 94 residues: Large ribosomal subunit protein uL23 (94 aa).

The protein belongs to the universal ribosomal protein uL23 family. Part of the 50S ribosomal subunit. Contacts protein L29, and trigger factor when it is bound to the ribosome.

Functionally, one of the early assembly proteins it binds 23S rRNA. One of the proteins that surrounds the polypeptide exit tunnel on the outside of the ribosome. Forms the main docking site for trigger factor binding to the ribosome. This is Large ribosomal subunit protein uL23 from Listeria monocytogenes serotype 4b (strain CLIP80459).